A 372-amino-acid polypeptide reads, in one-letter code: Cell division protein FtsZ 1 (372 aa).

Residues 51–55, 138–140, Glu169, Arg173, and Asp216 contribute to the GTP site; these read GAGCN and GTG. Residues 352-372 form a disordered region; it reads EETPAPSEEETTPVKIDIPEL.

It belongs to the FtsZ family. In terms of assembly, homodimer. Polymerizes to form a dynamic ring structure in a strictly GTP-dependent manner. Interacts directly with several other division proteins.

It localises to the cytoplasm. In terms of biological role, essential cell division protein that forms a contractile ring structure (Z ring) at the future cell division site. The regulation of the ring assembly controls the timing and the location of cell division. One of the functions of the FtsZ ring is to recruit other cell division proteins to the septum to produce a new cell wall between the dividing cells. Binds GTP and shows GTPase activity. The sequence is that of Cell division protein FtsZ 1 from Pyrococcus horikoshii (strain ATCC 700860 / DSM 12428 / JCM 9974 / NBRC 100139 / OT-3).